The chain runs to 219 residues: Peptidyl-tRNA hydrolase (219 aa).

Tyr-26 is a tRNA binding site. His-31 acts as the Proton acceptor in catalysis. The tRNA site is built by Tyr-78, Asn-80, and Asn-126.

Belongs to the PTH family. As to quaternary structure, monomer.

The protein localises to the cytoplasm. The enzyme catalyses an N-acyl-L-alpha-aminoacyl-tRNA + H2O = an N-acyl-L-amino acid + a tRNA + H(+). Its function is as follows. Hydrolyzes ribosome-free peptidyl-tRNAs (with 1 or more amino acids incorporated), which drop off the ribosome during protein synthesis, or as a result of ribosome stalling. Catalyzes the release of premature peptidyl moieties from peptidyl-tRNA molecules trapped in stalled 50S ribosomal subunits, and thus maintains levels of free tRNAs and 50S ribosomes. The chain is Peptidyl-tRNA hydrolase from Trichodesmium erythraeum (strain IMS101).